We begin with the raw amino-acid sequence, 406 residues long: Tubby-like F-box protein 11 (406 aa).

The F-box domain maps to 53-108 (SCWTQLPPELLREVLARVEESEGWWPRRRDVVACAGVCRSWRGIVREIVRTPEASG).

The protein belongs to the TUB family. Ubiquitous.

The protein is Tubby-like F-box protein 11 (TULP11) of Oryza sativa subsp. japonica (Rice).